The following is a 251-amino-acid chain: Triosephosphate isomerase (251 aa).

A substrate-binding site is contributed by 9-11 (NWK). The active-site Electrophile is the H95. Catalysis depends on E167, which acts as the Proton acceptor. Residues G173, S212, and 233–234 (GG) each bind substrate.

The protein belongs to the triosephosphate isomerase family. In terms of assembly, homodimer.

It is found in the cytoplasm. It catalyses the reaction D-glyceraldehyde 3-phosphate = dihydroxyacetone phosphate. It participates in carbohydrate biosynthesis; gluconeogenesis. It functions in the pathway carbohydrate degradation; glycolysis; D-glyceraldehyde 3-phosphate from glycerone phosphate: step 1/1. Functionally, involved in the gluconeogenesis. Catalyzes stereospecifically the conversion of dihydroxyacetone phosphate (DHAP) to D-glyceraldehyde-3-phosphate (G3P). In Pseudomonas fluorescens (strain Pf0-1), this protein is Triosephosphate isomerase.